The primary structure comprises 231 residues: Phosphatidylserine decarboxylase proenzyme (231 aa).

Ser188 functions as the Schiff-base intermediate with substrate; via pyruvic acid in the catalytic mechanism. Residue Ser188 is modified to Pyruvic acid (Ser); by autocatalysis.

Belongs to the phosphatidylserine decarboxylase family. PSD-A subfamily. As to quaternary structure, heterodimer of a large membrane-associated beta subunit and a small pyruvoyl-containing alpha subunit. It depends on pyruvate as a cofactor. Post-translationally, is synthesized initially as an inactive proenzyme. Formation of the active enzyme involves a self-maturation process in which the active site pyruvoyl group is generated from an internal serine residue via an autocatalytic post-translational modification. Two non-identical subunits are generated from the proenzyme in this reaction, and the pyruvate is formed at the N-terminus of the alpha chain, which is derived from the carboxyl end of the proenzyme. The post-translation cleavage follows an unusual pathway, termed non-hydrolytic serinolysis, in which the side chain hydroxyl group of the serine supplies its oxygen atom to form the C-terminus of the beta chain, while the remainder of the serine residue undergoes an oxidative deamination to produce ammonia and the pyruvoyl prosthetic group on the alpha chain.

The protein localises to the cell membrane. It catalyses the reaction a 1,2-diacyl-sn-glycero-3-phospho-L-serine + H(+) = a 1,2-diacyl-sn-glycero-3-phosphoethanolamine + CO2. It functions in the pathway phospholipid metabolism; phosphatidylethanolamine biosynthesis; phosphatidylethanolamine from CDP-diacylglycerol: step 2/2. Catalyzes the formation of phosphatidylethanolamine (PtdEtn) from phosphatidylserine (PtdSer). In Rickettsia felis (strain ATCC VR-1525 / URRWXCal2) (Rickettsia azadi), this protein is Phosphatidylserine decarboxylase proenzyme.